A 400-amino-acid chain; its full sequence is Chaperone protein DnaJ (400 aa).

The J domain occupies 4–69 (DYYETLGVTR…DKRRRYDQFG (66 aa)). The CR-type zinc-finger motif lies at 156–237 (GVEKTLKVKR…CYGEGIKLGE (82 aa)). Residues cysteine 169, cysteine 172, cysteine 185, cysteine 188, cysteine 211, cysteine 214, cysteine 225, and cysteine 228 each coordinate Zn(2+). CXXCXGXG motif repeat units follow at residues 169–176 (CEVCNGTG), 185–192 (CQTCHGSG), 211–218 (CPTCGGEG), and 225–232 (CTACYGEG).

The protein belongs to the DnaJ family. In terms of assembly, homodimer. Requires Zn(2+) as cofactor.

The protein resides in the cytoplasm. Its function is as follows. Participates actively in the response to hyperosmotic and heat shock by preventing the aggregation of stress-denatured proteins and by disaggregating proteins, also in an autonomous, DnaK-independent fashion. Unfolded proteins bind initially to DnaJ; upon interaction with the DnaJ-bound protein, DnaK hydrolyzes its bound ATP, resulting in the formation of a stable complex. GrpE releases ADP from DnaK; ATP binding to DnaK triggers the release of the substrate protein, thus completing the reaction cycle. Several rounds of ATP-dependent interactions between DnaJ, DnaK and GrpE are required for fully efficient folding. Also involved, together with DnaK and GrpE, in the DNA replication of plasmids through activation of initiation proteins. This Chlorobium chlorochromatii (strain CaD3) protein is Chaperone protein DnaJ.